The primary structure comprises 250 residues: Tetrathionate reductase subunit B (250 aa).

Positions 1 to 33 form a signal peptide, tat-type signal; it reads MWTGVNMDSSKRQFLQQLGVLTAGASLVPLAEA. 4Fe-4S ferredoxin-type domains are found at residues 50–79, 97–128, and 129–158; these read YAMLIDLRRCIGCQSCTVSCTIENQTPQGA, VTNVLLPRLCNHCDNPPCVPVCPVQATFQRED, and GIVVVDNKRCVGCAYCVQACPYDARFINHE. [4Fe-4S] cluster-binding residues include Cys59, Cys62, Cys65, Cys69, Cys106, Cys109, Cys114, Cys118, Cys138, Cys141, Cys144, Cys148, Cys165, Cys168, Cys180, and Cys184.

As to quaternary structure, probably composed of three subunits: TtrA, TtrB and TtrC. In terms of processing, predicted to be exported by the Tat system. The position of the signal peptide cleavage has not been experimentally proven.

The protein localises to the periplasm. It localises to the cell inner membrane. Part of a membrane-bound tetrathionate reductase that catalyzes the reduction of tetrathionate to thiosulfate. TtrB is probably involved in transfer of electrons from TtrC to TtrA. During mice infection, the ability to use tetrathionate as an electron acceptor is a growth advantage for S.typhimurium over the competing microbiota in the lumen of the inflamed gut. The chain is Tetrathionate reductase subunit B (ttrB) from Salmonella typhimurium (strain LT2 / SGSC1412 / ATCC 700720).